The following is a 276-amino-acid chain: Secretagogin (276 aa).

EF-hand domains follow at residues 12 to 47 (LDAA…LLAK), 105 to 140 (DNSV…LFLH), 149 to 184 (ELEE…QENF), 197 to 232 (ERKR…MMEL), and 240 to 276 (VDLD…KINP). Ca(2+) contacts are provided by D118, D120, S122, E129, D162, N164, D166, R168, D173, D210, S212, T214, E221, D254, N256, D258, K260, and E265.

In terms of tissue distribution, highly expressed in pancreas, in particular in pancreatic islets and pancreatic beta-cells. Detected in prostate, adrenal gland, small intestine, stomach and thyroid (at protein level).

The protein localises to the cytoplasm. The protein resides in the secreted. It is found in the cytoplasmic vesicle. It localises to the secretory vesicle membrane. The polypeptide is Secretagogin (Scgn) (Rattus norvegicus (Rat)).